Consider the following 332-residue polypeptide: PTS-dependent dihydroxyacetone kinase, dihydroxyacetone-binding subunit DhaK (332 aa).

The region spanning 9–331 (QPQDVVSEML…LNEDVKTISW (323 aa)) is the DhaK domain. Dihydroxyacetone contacts are provided by residues 55 to 58 (GSGH), Lys-106, and Asp-111. His-58 functions as the Proton acceptor in the catalytic mechanism. His-220 serves as the catalytic Tele-hemiaminal-histidine intermediate.

Homodimer. The dihydroxyacetone kinase complex is composed of a homodimer of DhaM, a homodimer of DhaK and the subunit DhaL.

It catalyses the reaction dihydroxyacetone + phosphoenolpyruvate = dihydroxyacetone phosphate + pyruvate. Its pathway is polyol metabolism; glycerol degradation. In terms of biological role, dihydroxyacetone binding subunit of the dihydroxyacetone kinase, which is responsible the phosphoenolpyruvate (PEP)-dependent phosphorylation of dihydroxyacetone via a phosphoryl group transfer from DhaL-ATP. The protein is PTS-dependent dihydroxyacetone kinase, dihydroxyacetone-binding subunit DhaK of Lactococcus lactis subsp. lactis (strain IL1403) (Streptococcus lactis).